We begin with the raw amino-acid sequence, 447 residues long: ATP-dependent 6-phosphofructokinase (447 aa).

ATP-binding positions include G88, 154–155, and 179–182; these read RG and GDGT. D180 lines the Mg(2+) pocket. Residues 208–210, 253–255, E315, and 368–371 contribute to the substrate site; these read TVD, MGR, and YIIR. Residue D210 is the Proton acceptor of the active site.

It belongs to the phosphofructokinase type A (PFKA) family. PPi-dependent PFK group II subfamily. Atypical ATP-dependent clade 'X' sub-subfamily. As to quaternary structure, homodimer. It depends on Mg(2+) as a cofactor.

The protein localises to the cytoplasm. It catalyses the reaction beta-D-fructose 6-phosphate + ATP = beta-D-fructose 1,6-bisphosphate + ADP + H(+). Its pathway is carbohydrate degradation; glycolysis; D-glyceraldehyde 3-phosphate and glycerone phosphate from D-glucose: step 3/4. Catalyzes the phosphorylation of D-fructose 6-phosphate to fructose 1,6-bisphosphate by ATP, the first committing step of glycolysis. The polypeptide is ATP-dependent 6-phosphofructokinase (Borreliella burgdorferi (strain ATCC 35210 / DSM 4680 / CIP 102532 / B31) (Borrelia burgdorferi)).